The chain runs to 670 residues: Acetyl-coenzyme A synthetase (670 aa).

CoA is bound by residues 205 to 208 (RRGR) and threonine 326. ATP-binding positions include 402 to 404 (GEP), 426 to 431 (STWWMT), aspartate 517, arginine 532, and arginine 543. The Mg(2+) site is built by histidine 556 and valine 559. Arginine 601 serves as a coordination point for CoA. Residue lysine 626 is modified to N6-acetyllysine.

It belongs to the ATP-dependent AMP-binding enzyme family. Mg(2+) serves as cofactor. In terms of processing, acetylated. Deacetylation by the SIR2-homolog deacetylase activates the enzyme.

It catalyses the reaction acetate + ATP + CoA = acetyl-CoA + AMP + diphosphate. Functionally, catalyzes the conversion of acetate into acetyl-CoA (AcCoA), an essential intermediate at the junction of anabolic and catabolic pathways. AcsA undergoes a two-step reaction. In the first half reaction, AcsA combines acetate with ATP to form acetyl-adenylate (AcAMP) intermediate. In the second half reaction, it can then transfer the acetyl group from AcAMP to the sulfhydryl group of CoA, forming the product AcCoA. The chain is Acetyl-coenzyme A synthetase from Pyrobaculum aerophilum (strain ATCC 51768 / DSM 7523 / JCM 9630 / CIP 104966 / NBRC 100827 / IM2).